The following is a 388-amino-acid chain: LL-diaminopimelate aminotransferase (388 aa).

Tyrosine 13, glycine 38, lysine 102, tyrosine 126, and asparagine 176 together coordinate substrate. Pyridoxal 5'-phosphate contacts are provided by residues 101–102 (SK), tyrosine 126, asparagine 176, tyrosine 207, and 235–237 (SLS). Lysine 238 carries the post-translational modification N6-(pyridoxal phosphate)lysine. Residue arginine 246 participates in pyridoxal 5'-phosphate binding. Substrate is bound at residue arginine 364.

This sequence belongs to the class-I pyridoxal-phosphate-dependent aminotransferase family. LL-diaminopimelate aminotransferase subfamily. Homodimer. Requires pyridoxal 5'-phosphate as cofactor.

It catalyses the reaction (2S,6S)-2,6-diaminopimelate + 2-oxoglutarate = (S)-2,3,4,5-tetrahydrodipicolinate + L-glutamate + H2O + H(+). It functions in the pathway amino-acid biosynthesis; L-lysine biosynthesis via DAP pathway; LL-2,6-diaminopimelate from (S)-tetrahydrodipicolinate (aminotransferase route): step 1/1. Involved in the synthesis of meso-diaminopimelate (m-DAP or DL-DAP), required for both lysine and peptidoglycan biosynthesis. Catalyzes the direct conversion of tetrahydrodipicolinate to LL-diaminopimelate. The chain is LL-diaminopimelate aminotransferase from Dehalococcoides mccartyi (strain ATCC BAA-2100 / JCM 16839 / KCTC 5957 / BAV1).